Here is a 120-residue protein sequence, read N- to C-terminus: C-C motif chemokine 23 (120 aa).

The N-terminal stretch at 1–21 (MKVSVAALSCLMLVTALGSQA) is a signal peptide. 3 disulfides stabilise this stretch: C54/C78, C55/C94, and C65/C105.

It belongs to the intercrine beta (chemokine CC) family. In terms of processing, the N-terminal is proteolytically cleaved by proteases associated with inflammatory responses. The processed forms, CCL23(19-99), CCL23(22-99), CCL23(27-99) and CCL23(30-99) exhibit increase in CCR1-mediated signaling and chemotaxis assays in vitro. In terms of tissue distribution, high levels in adult lung, liver, skeletal muscle and pancreas. Moderate levels in fetal liver, adult bone marrow and placenta. The short form is the major species and the longer form was detected only in very low abundance. CCL23(19-99), CCL23(22-99), CCL23(27-99), CCL23(30-99) are found in high levels in synovial fluids from rheumatoid patients.

The protein resides in the secreted. Its function is as follows. Shows chemotactic activity for monocytes, resting T-lymphocytes, and neutrophils, but not for activated lymphocytes. Inhibits proliferation of myeloid progenitor cells in colony formation assays. This protein can bind heparin. Binds CCR1. CCL23(19-99), CCL23(22-99), CCL23(27-99), CCL23(30-99) are more potent chemoattractants than CCL23. This is C-C motif chemokine 23 (CCL23) from Homo sapiens (Human).